The sequence spans 310 residues: GTP-binding protein GTR1 (310 aa).

The GTP site is built by Ser15, Gly18, Lys19, Ser20, Ser21, Thr35, Thr41, Gly64, His126, Asp129, and Ile166.

This sequence belongs to the GTR/RAG GTP-binding protein family. As to quaternary structure, heterodimer; with GTR2. Component of the GSE complex composed of GTR1, GTR2, SLM4, MEH1 and LTV1. Interacts with GTR2; the interaction is direct. Interacts with TOR1.

It is found in the vacuole membrane. It catalyses the reaction GTP + H2O = GDP + phosphate + H(+). Functionally, GTPase involved in activation of the TORC1 signaling pathway, which promotes growth and represses autophagy in nutrient-rich conditions. Also required for TORC1 inactivation during nitrogen starvation. Required for intracellular sorting of GAP1 out of the endosome. Functionally associated with the inorganic phosphate transporter PHO84, and may be involved in regulating its function or localization. This is GTP-binding protein GTR1 (GTR1) from Saccharomyces cerevisiae (strain ATCC 204508 / S288c) (Baker's yeast).